A 363-amino-acid polypeptide reads, in one-letter code: Proline/serine-rich coiled-coil protein 1 (363 aa).

At serine 22 the chain carries Phosphoserine. Copy 1 of the repeat occupies 38 to 41 (PEKP). The segment at 39 to 67 (EKPLRRGLSHRSDPNAVAPAPQGVRLSLG) is disordered. Leucine 42 is modified (phosphoserine). Glycine 45 is subject to Phosphothreonine. Phosphoserine is present on residues serine 47, serine 65, serine 70, serine 98, serine 122, and serine 140. Repeat 2 spans residues 68-71 (PLSP). Residues 70–94 (SPEKLEEILDEANRLAAQLEQCALQ) adopt a coiled-coil conformation. Positions 95–363 (DRESAGEGLG…RKVAVPGPTR (269 aa)) are disordered. Residues 103–246 (LGPRRVKPSP…HPSPPGPPTP (144 aa)) are 4 X 4 AA repeats of P-X-X-P. The segment covering 112-124 (PRRETFVLKDSPV) has biased composition (basic and acidic residues). Over residues 133 to 148 (SLTRSTPSPSSLTPRL) the composition is skewed to low complexity. Threonine 145 bears the Phosphothreonine mark. Residues serine 186 and serine 190 each carry the phosphoserine modification. The span at 186 to 196 (SPASSPLTRST) shows a compositional bias: polar residues. A compositionally biased stretch (low complexity) spans 197 to 210 (PPVRGRAGPSGRAA). Serine 212 is modified (phosphoserine). A Phosphothreonine modification is found at threonine 215. 2 consecutive repeat copies span residues 238-241 (PSPP) and 243-246 (PPTP).

This sequence belongs to the PSRC1 family. Interacts with APC2. Interacts with KIF2A. Interacts with ANKRD53; recruits ANKRD53 to the spindle during mitosis. Post-translationally, phosphorylated during mitosis. As to expression, widely expressed in adult and fetal tissues, with highest expression in the adult brain and fetal thymus. Not detected in adult skeletal muscle.

It localises to the cytoplasm. The protein localises to the cytoskeleton. Its subcellular location is the spindle. It is found in the spindle pole. In terms of biological role, required for normal progression through mitosis. Required for normal congress of chromosomes at the metaphase plate, and for normal rate of chromosomal segregation during anaphase. Plays a role in the regulation of mitotic spindle dynamics. Increases the rate of turnover of microtubules on metaphase spindles, and contributes to the generation of normal tension across sister kinetochores. Recruits KIF2A and ANKRD53 to the mitotic spindle and spindle poles. May participate in p53/TP53-regulated growth suppression. In Homo sapiens (Human), this protein is Proline/serine-rich coiled-coil protein 1 (PSRC1).